A 69-amino-acid chain; its full sequence is Guanine nucleotide-binding protein G(I)/G(S)/G(O) subunit gamma-T2 (69 aa).

Cys66 carries the post-translational modification Cysteine methyl ester. Cys66 carries S-farnesyl cysteine lipidation. The propeptide at 67–69 (IIS) is removed in mature form.

It belongs to the G protein gamma family. G proteins are composed of 3 units, alpha, beta and gamma.

It is found in the cell membrane. Its function is as follows. Guanine nucleotide-binding proteins (G proteins) are involved as a modulator or transducer in various transmembrane signaling systems. The beta and gamma chains are required for the GTPase activity, for replacement of GDP by GTP, and for G protein-effector interaction. The chain is Guanine nucleotide-binding protein G(I)/G(S)/G(O) subunit gamma-T2 (GNGT2) from Bos taurus (Bovine).